A 201-amino-acid chain; its full sequence is Large ribosomal subunit protein uL4 (201 aa).

The interval 45–71 (AQKTRAEVTGSGKKPWRQKGTGRARAG) is disordered.

This sequence belongs to the universal ribosomal protein uL4 family. In terms of assembly, part of the 50S ribosomal subunit.

In terms of biological role, one of the primary rRNA binding proteins, this protein initially binds near the 5'-end of the 23S rRNA. It is important during the early stages of 50S assembly. It makes multiple contacts with different domains of the 23S rRNA in the assembled 50S subunit and ribosome. Functionally, forms part of the polypeptide exit tunnel. The polypeptide is Large ribosomal subunit protein uL4 (Shewanella sp. (strain MR-4)).